Consider the following 104-residue polypeptide: MAAIQGIEGGISQLQATAMAANGQETHSQSTVSFAGQLHAALDRISDRQTAARVQAEKFTLGEPGIALNDVMADMQKASVSMQMGIQVRNKLVAAYQEVMSMQV.

Belongs to the FliE family.

Its subcellular location is the bacterial flagellum basal body. The polypeptide is Flagellar hook-basal body complex protein FliE (Salmonella typhi).